The chain runs to 171 residues: NADH-quinone oxidoreductase subunit B 1 (171 aa).

[4Fe-4S] cluster is bound by residues Cys44, Cys45, Cys110, and Cys139.

The protein belongs to the complex I 20 kDa subunit family. NDH-1 is composed of 14 different subunits. Subunits NuoB, C, D, E, F, and G constitute the peripheral sector of the complex. It depends on [4Fe-4S] cluster as a cofactor.

Its subcellular location is the cell inner membrane. The catalysed reaction is a quinone + NADH + 5 H(+)(in) = a quinol + NAD(+) + 4 H(+)(out). In terms of biological role, NDH-1 shuttles electrons from NADH, via FMN and iron-sulfur (Fe-S) centers, to quinones in the respiratory chain. The immediate electron acceptor for the enzyme in this species is believed to be ubiquinone. Couples the redox reaction to proton translocation (for every two electrons transferred, four hydrogen ions are translocated across the cytoplasmic membrane), and thus conserves the redox energy in a proton gradient. This chain is NADH-quinone oxidoreductase subunit B 1, found in Opitutus terrae (strain DSM 11246 / JCM 15787 / PB90-1).